Reading from the N-terminus, the 185-residue chain is Ribosome-recycling factor (185 aa).

This sequence belongs to the RRF family.

The protein localises to the cytoplasm. Its function is as follows. Responsible for the release of ribosomes from messenger RNA at the termination of protein biosynthesis. May increase the efficiency of translation by recycling ribosomes from one round of translation to another. This Pseudomonas syringae pv. tomato (strain ATCC BAA-871 / DC3000) protein is Ribosome-recycling factor.